Here is a 497-residue protein sequence, read N- to C-terminus: Putative glucuronosyltransferase PGSIP8 (497 aa).

Residues 3–23 form a helical membrane-spanning segment; that stretch reads LQRGFVFLSLVLSFMIIETTA. Residues Asp165 and Asp167 each contribute to the Mn(2+) site. The next 5 helical transmembrane spans lie at 319–339, 365–385, 388–408, 418–438, and 442–462; these read YSAEMPLVIIQAMFYLGIIVV, GFKLIALLSVVAAYIFPFFTI, TIHPLIGWSLYLMASFALSSI, LPVLTPWLGILGTLLVMAFPW, and GVVRALSVFAYAFCCAPFVWV.

It belongs to the glycosyltransferase 8 family. Glycogenin subfamily. Requires Mn(2+) as cofactor.

It localises to the membrane. This Arabidopsis thaliana (Mouse-ear cress) protein is Putative glucuronosyltransferase PGSIP8 (PGSIP8).